A 122-amino-acid polypeptide reads, in one-letter code: uncharacterized protein (122 aa).

The chain crosses the membrane as a helical span at residues 93 to 113 (ILRICIVFLSLKIYTLTLVII).

The protein resides in the membrane. This is an uncharacterized protein from Saccharomyces cerevisiae (strain ATCC 204508 / S288c) (Baker's yeast).